The following is a 231-amino-acid chain: Phosphoglycolate phosphatase (231 aa).

The Nucleophile role is filled by Asp-9. Mg(2+) contacts are provided by Asp-9 and Asp-11. Residue Asp-11 is the Proton donor of the active site. Lys-154 is a substrate binding site. Residues Asp-177 and Asp-181 each contribute to the Mg(2+) site.

This sequence belongs to the archaeal SPP-like hydrolase family. In terms of assembly, homodimer. The cofactor is Mg(2+).

It catalyses the reaction 2-phosphoglycolate + H2O = glycolate + phosphate. Functionally, catalyzes the dephosphorylation of 2-phosphoglycolate. Has phosphatase activity towards p-nitrophenylphosphate (in vitro). The protein is Phosphoglycolate phosphatase of Pyrococcus horikoshii (strain ATCC 700860 / DSM 12428 / JCM 9974 / NBRC 100139 / OT-3).